The primary structure comprises 111 residues: COX assembly mitochondrial protein (111 aa).

In terms of domain architecture, CHCH spans 39-82; it reads YKKCANFVQAMADCAKANGMKVFPTCDKQRDEMKSCLLFYQTDE. 2 short sequence motifs (cx9C motif) span residues 42-52 and 64-74; these read CANFVQAMADC and CDKQRDEMKSC. 2 cysteine pairs are disulfide-bonded: Cys42–Cys74 and Cys52–Cys64.

It belongs to the CMC family.

Its subcellular location is the mitochondrion inner membrane. In terms of biological role, required for mitochondrial cytochrome c oxidase (COX) assembly and respiration. Binds copper. May be involved in copper trafficking and distribution to mitochondrial COX and SOD1. In Saccharomyces cerevisiae (strain YJM789) (Baker's yeast), this protein is COX assembly mitochondrial protein (CMC1).